The chain runs to 224 residues: tRNA (guanine-N(7)-)-methyltransferase (224 aa).

S-adenosyl-L-methionine is bound by residues Glu-54, Glu-79, Glu-106, and Asp-129. Residue Asp-129 is part of the active site. Residues Lys-133 and Asp-165 each coordinate substrate.

Belongs to the class I-like SAM-binding methyltransferase superfamily. TrmB family.

It catalyses the reaction guanosine(46) in tRNA + S-adenosyl-L-methionine = N(7)-methylguanosine(46) in tRNA + S-adenosyl-L-homocysteine. The protein operates within tRNA modification; N(7)-methylguanine-tRNA biosynthesis. In terms of biological role, catalyzes the formation of N(7)-methylguanine at position 46 (m7G46) in tRNA. This Chlamydia muridarum (strain MoPn / Nigg) protein is tRNA (guanine-N(7)-)-methyltransferase.